Consider the following 128-residue polypeptide: Arginine decarboxylase proenzyme (128 aa).

Residue Ser-76 is the Schiff-base intermediate with substrate; via pyruvic acid of the active site. Residue Ser-76 is modified to Pyruvic acid (Ser); by autocatalysis. The active-site Proton acceptor; for processing activity is the His-81. Cys-96 functions as the Proton donor; for catalytic activity in the catalytic mechanism.

This sequence belongs to the prokaryotic AdoMetDC family. Type 1 subfamily. Heterooctamer of four alpha and four beta chains arranged as a tetramer of alpha/beta heterodimers. Pyruvate serves as cofactor. In terms of processing, is synthesized initially as an inactive proenzyme. Formation of the active enzyme involves a self-maturation process in which the active site pyruvoyl group is generated from an internal serine residue via an autocatalytic post-translational modification. Two non-identical subunits are generated from the proenzyme in this reaction, and the pyruvate is formed at the N-terminus of the alpha chain, which is derived from the carboxyl end of the proenzyme. The post-translation cleavage follows an unusual pathway, termed non-hydrolytic serinolysis, in which the side chain hydroxyl group of the serine supplies its oxygen atom to form the C-terminus of the beta chain, while the remainder of the serine residue undergoes an oxidative deamination to produce ammonia and the pyruvoyl group blocking the N-terminus of the alpha chain.

It carries out the reaction L-arginine + H(+) = agmatine + CO2. Its pathway is amine and polyamine biosynthesis; agmatine biosynthesis; agmatine from L-arginine: step 1/1. Functionally, specifically catalyzes the decarboxylation of L-arginine to agmatine. Has no S-adenosylmethionine decarboxylase (AdoMetDC) activity. The protein is Arginine decarboxylase proenzyme of Metallosphaera sedula (strain ATCC 51363 / DSM 5348 / JCM 9185 / NBRC 15509 / TH2).